We begin with the raw amino-acid sequence, 655 residues long: Macrolide export ATP-binding/permease protein MacB (655 aa).

In terms of domain architecture, ABC transporter spans 6 to 244 (IELRDVWREF…DALAGDEGPE (239 aa)). An ATP-binding site is contributed by 42–49 (GASGSGKS). Positions 225-252 (DQARPDAPPLDALAGDEGPEAPRPAPQP) are disordered. 4 helical membrane passes run 280 to 300 (LTMLGIIIGIAAVVSVVALGA), 527 to 547 (LTLLVSMIAVISLVVVGIGVM), 583 to 603 (VLVCLIGGVLGILLSLSIGVL), and 620 to 640 (SMVLAFVCSTLIGVAFGFLPA).

Belongs to the ABC transporter superfamily. Macrolide exporter (TC 3.A.1.122) family. In terms of assembly, homodimer.

The protein localises to the cell inner membrane. Its function is as follows. Non-canonical ABC transporter that contains transmembrane domains (TMD), which form a pore in the inner membrane, and an ATP-binding domain (NBD), which is responsible for energy generation. Confers resistance against macrolides. This Bordetella avium (strain 197N) protein is Macrolide export ATP-binding/permease protein MacB.